The chain runs to 403 residues: Serine/threonine-protein phosphatase 4 regulatory subunit 2-A (403 aa).

3 stretches are compositionally biased toward polar residues: residues 140-149 (EKNNSTSLNR), 156-170 (PSNSQSYTDRSNVNG), and 183-196 (SLSSPMNTNGLPDS). A disordered region spans residues 140-403 (EKNNSTSLNR…DAPEEPMEQD (264 aa)). Basic and acidic residues predominate over residues 197–211 (TENKESDLQQKEKSQ). 2 stretches are compositionally biased toward polar residues: residues 212–226 (SDSAVSDDGSQATTS) and 371–387 (ATSSGKSTETLTLSPME). A compositionally biased stretch (acidic residues) spans 388–403 (NSEEATDAPEEPMEQD).

This sequence belongs to the PPP4R2 family. As to quaternary structure, serine/threonine-protein phosphatase 4 (PP4) occurs in different assemblies of the catalytic and one or more regulatory subunits.

Functionally, regulatory subunit of serine/threonine-protein phosphatase 4 (PP4). In Xenopus laevis (African clawed frog), this protein is Serine/threonine-protein phosphatase 4 regulatory subunit 2-A (ppp4r2-a).